The following is a 288-amino-acid chain: Lipoyl synthase (288 aa).

[4Fe-4S] cluster is bound by residues cysteine 42, cysteine 47, cysteine 53, cysteine 68, cysteine 72, cysteine 75, and serine 280. In terms of domain architecture, Radical SAM core spans 54–269; it reads WGEGTATFMI…EKYGIELGFR (216 aa).

Belongs to the radical SAM superfamily. Lipoyl synthase family. The cofactor is [4Fe-4S] cluster.

It localises to the cytoplasm. The catalysed reaction is [[Fe-S] cluster scaffold protein carrying a second [4Fe-4S](2+) cluster] + N(6)-octanoyl-L-lysyl-[protein] + 2 oxidized [2Fe-2S]-[ferredoxin] + 2 S-adenosyl-L-methionine + 4 H(+) = [[Fe-S] cluster scaffold protein] + N(6)-[(R)-dihydrolipoyl]-L-lysyl-[protein] + 4 Fe(3+) + 2 hydrogen sulfide + 2 5'-deoxyadenosine + 2 L-methionine + 2 reduced [2Fe-2S]-[ferredoxin]. It functions in the pathway protein modification; protein lipoylation via endogenous pathway; protein N(6)-(lipoyl)lysine from octanoyl-[acyl-carrier-protein]: step 2/2. Catalyzes the radical-mediated insertion of two sulfur atoms into the C-6 and C-8 positions of the octanoyl moiety bound to the lipoyl domains of lipoate-dependent enzymes, thereby converting the octanoylated domains into lipoylated derivatives. The polypeptide is Lipoyl synthase (Flavobacterium johnsoniae (strain ATCC 17061 / DSM 2064 / JCM 8514 / BCRC 14874 / CCUG 350202 / NBRC 14942 / NCIMB 11054 / UW101) (Cytophaga johnsonae)).